The chain runs to 235 residues: Small ribosomal subunit protein uS3 (235 aa).

A KH type-2 domain is found at 39–107 (IRQYVFKALP…DVSLNIVEIR (69 aa)).

Belongs to the universal ribosomal protein uS3 family. Part of the 30S ribosomal subunit. Forms a tight complex with proteins S10 and S14.

Functionally, binds the lower part of the 30S subunit head. Binds mRNA in the 70S ribosome, positioning it for translation. This chain is Small ribosomal subunit protein uS3, found in Sphingopyxis alaskensis (strain DSM 13593 / LMG 18877 / RB2256) (Sphingomonas alaskensis).